A 103-amino-acid chain; its full sequence is Putative septation protein SpoVG (103 aa).

This sequence belongs to the SpoVG family.

Its function is as follows. Could be involved in septation. This is Putative septation protein SpoVG from Exiguobacterium sibiricum (strain DSM 17290 / CCUG 55495 / CIP 109462 / JCM 13490 / 255-15).